Here is a 230-residue protein sequence, read N- to C-terminus: Cytochrome c-552 (230 aa).

The signal sequence occupies residues 1 to 47; that stretch reads MTTYLSQDRLRNKENDTMTYQHSKMYQSRTFLLFSALLLVAGQASAA. Cysteine 63, cysteine 66, histidine 67, cysteine 166, cysteine 169, and histidine 170 together coordinate heme c.

Binds 2 heme c groups covalently per subunit.

The protein localises to the periplasm. Functionally, diheme, high potential cytochrome c. In Acidithiobacillus ferridurans, this protein is Cytochrome c-552 (cyc1).